We begin with the raw amino-acid sequence, 4092 residues long: Dynein heavy chain, cytoplasmic (4092 aa).

Residues 1 to 1757 (MCKNEARLAN…FISQSGYLLQ (1757 aa)) form a stem region. Coiled-coil stretches lie at residues 154–175 (VETIDKTRRKLDDISKQFQQLH), 486–508 (KLEQAESEFSKNMLDLEKKLQNT), 542–566 (KVLENQQILLLEIKKDIRQLETGLE), 932–959 (VIKLKDDIQNCIEQVQNLHCKINSYVKE), 1042–1063 (YERDARKLHEDMNRDREAVEDM), and 1681–1705 (KGLLDKLNKSSDNVKKKIEALLVEY). AAA stretches follow at residues 1758 to 1979 (YKFE…VLRN), 2036 to 2273 (QCLK…NDLV), 2379 to 2628 (SLEA…LVRG), and 2722 to 2984 (TFCD…KVGV). Residues 1796-1803 (GPAGTGKT), 2074-2081 (GKAGCGKT), 2418-2425 (GPPGSGKT), and 2760-2767 (GASRTGKT) contribute to the ATP site. Coiled-coil stretches lie at residues 2993-3092 (IDGL…KRKE), 3242-3300 (KTKA…KSLT), and 3532-3608 (ITLT…EEFF). A stalk region spans residues 2993 to 3300 (IDGLRALVKL…RSISLVKSLT (308 aa)). AAA regions lie at residues 3370 to 3599 (LVTL…NIEK) and 3760 to 3970 (LNWF…YLEN).

It belongs to the dynein heavy chain family. As to quaternary structure, the dynein complex consists of at least two heavy chains and a number of intermediate and light chains. Interacts with DYN3.

Its subcellular location is the cytoplasm. It localises to the cytoskeleton. Its function is as follows. Cytoplasmic dynein acts as a motor for the intracellular retrograde motility of vesicles and organelles along microtubules. Dynein has ATPase activity; the force-producing power stroke is thought to occur on release of ADP. Required to maintain uniform nuclear distribution in hyphae. May play an important role in the proper orientation of the mitotic spindle into the budding daughter cell yeast. Probably required for normal progression of the cell cycle. The sequence is that of Dynein heavy chain, cytoplasmic (DYN1) from Saccharomyces cerevisiae (strain ATCC 204508 / S288c) (Baker's yeast).